The sequence spans 150 residues: Early 4 ORF6/7 control protein (150 aa).

A disordered region spans residues 1-31 (MTTSGVPFGMTLRPTRSRLSRRTPYSRDRLP). The Nuclear localization signal motif lies at 1–58 (MTTSGVPFGMTLRPTRSRLSRRTPYSRDRLPPFETETRATILEDHPLLPECNTLTMHN).

The protein belongs to the adenoviridae E4-orf6/7 family. In terms of assembly, interacts with host E2F proteins.

The protein resides in the host nucleus. Functionally, modulates viral and host transcriptional activity to promote viral genome replication. Stimulates viral E2a promoter activity by binding and inducing dimerization of host E2F. During viral infection E1A protein binds to cellular retinablastoma (RB) family members and dissociates these repressors from a complex with E2F proteins. Free E2F is then bound to E4orf6/7 which leads to transactivation of viral E2 promoter, and cellular promoters such as E2F-1 promoter. Activation of cellular E2F targets promote cell cycle S phase and thereby possibly favorises viral DNA replication process. The polypeptide is Early 4 ORF6/7 control protein (Human adenovirus C serotype 2 (HAdV-2)).